A 291-amino-acid polypeptide reads, in one-letter code: Quinol oxidase subunit 2 (291 aa).

A signal peptide spans 1–28 (MQLKKAFWKLASLLPXSLLLFLGGCDKK). The next 2 membrane-spanning stretches (helical) occupy residues 49 to 69 (SFLL…VILI) and 91 to 111 (LEII…IPTV).

Belongs to the cytochrome c oxidase subunit 2 family.

Its subcellular location is the cell membrane. It carries out the reaction 2 a quinol + O2 = 2 a quinone + 2 H2O. Catalyzes quinol oxidation with the concomitant reduction of oxygen to water. Subunit II transfers the electrons from a quinol to the binuclear center of the catalytic subunit I. The sequence is that of Quinol oxidase subunit 2 from Bacillus cereus (strain ATCC 10987 / NRS 248).